The chain runs to 144 residues: MVKKILLINGPNLNSLGTREPEKYGTTTLKDIEQAAIEQAKAKGSEMAVYQNNTEGFIVDRIHEAKKQGVEYILINAGAYTHTSVAIRDALSAVAIPFIEIHITNVHSREEFRHKSYLSDTAVAVICGLGVYGYTAAIDFALNK.

The Proton acceptor role is filled by Tyr24. Substrate is bound by residues Asn76, His82, and Asp89. His102 (proton donor) is an active-site residue. Residues 103 to 104 (IT) and Arg113 contribute to the substrate site.

The protein belongs to the type-II 3-dehydroquinase family. Homododecamer. Adopts a ring-like structure, composed of an arrangement of two hexameric rings stacked on top of one another.

It catalyses the reaction 3-dehydroquinate = 3-dehydroshikimate + H2O. It participates in aromatic compound metabolism; 3,4-dihydroxybenzoate biosynthesis; 3,4-dihydroxybenzoate from 3-dehydroquinate: step 1/2. Is involved in the catabolism of quinate. Allows the utilization of quinate as carbon source via the beta-ketoadipate pathway. The polypeptide is Catabolic 3-dehydroquinase (Debaryomyces hansenii (strain ATCC 36239 / CBS 767 / BCRC 21394 / JCM 1990 / NBRC 0083 / IGC 2968) (Yeast)).